A 92-amino-acid chain; its full sequence is Small ribosomal subunit protein uS19 (92 aa).

This sequence belongs to the universal ribosomal protein uS19 family.

Functionally, protein S19 forms a complex with S13 that binds strongly to the 16S ribosomal RNA. In Chromobacterium violaceum (strain ATCC 12472 / DSM 30191 / JCM 1249 / CCUG 213 / NBRC 12614 / NCIMB 9131 / NCTC 9757 / MK), this protein is Small ribosomal subunit protein uS19.